Reading from the N-terminus, the 442-residue chain is Tubulin beta chain (442 aa).

The GTP site is built by Q11, E69, S138, G142, T143, G144, N204, and N226. E69 lines the Mg(2+) pocket.

This sequence belongs to the tubulin family. As to quaternary structure, dimer of alpha and beta chains. A typical microtubule is a hollow water-filled tube with an outer diameter of 25 nm and an inner diameter of 15 nM. Alpha-beta heterodimers associate head-to-tail to form protofilaments running lengthwise along the microtubule wall with the beta-tubulin subunit facing the microtubule plus end conferring a structural polarity. Microtubules usually have 13 protofilaments but different protofilament numbers can be found in some organisms and specialized cells. Mg(2+) is required as a cofactor.

Its subcellular location is the cytoplasm. The protein localises to the cytoskeleton. Functionally, tubulin is the major constituent of microtubules, a cylinder consisting of laterally associated linear protofilaments composed of alpha- and beta-tubulin heterodimers. Microtubules grow by the addition of GTP-tubulin dimers to the microtubule end, where a stabilizing cap forms. Below the cap, tubulin dimers are in GDP-bound state, owing to GTPase activity of alpha-tubulin. In Paramecium tetraurelia, this protein is Tubulin beta chain (bPT2).